The following is a 430-amino-acid chain: 3-phosphoshikimate 1-carboxyvinyltransferase (430 aa).

3-phosphoshikimate is bound by residues Lys-21, Ser-22, and Arg-26. Lys-21 serves as a coordination point for phosphoenolpyruvate. Residues Gly-95 and Arg-123 each contribute to the phosphoenolpyruvate site. Positions 167, 169, 315, and 342 each coordinate 3-phosphoshikimate. Gln-169 serves as a coordination point for phosphoenolpyruvate. Asp-315 (proton acceptor) is an active-site residue. The phosphoenolpyruvate site is built by Arg-346 and Arg-390.

The protein belongs to the EPSP synthase family. In terms of assembly, monomer.

It is found in the cytoplasm. It carries out the reaction 3-phosphoshikimate + phosphoenolpyruvate = 5-O-(1-carboxyvinyl)-3-phosphoshikimate + phosphate. The protein operates within metabolic intermediate biosynthesis; chorismate biosynthesis; chorismate from D-erythrose 4-phosphate and phosphoenolpyruvate: step 6/7. Its function is as follows. Catalyzes the transfer of the enolpyruvyl moiety of phosphoenolpyruvate (PEP) to the 5-hydroxyl of shikimate-3-phosphate (S3P) to produce enolpyruvyl shikimate-3-phosphate and inorganic phosphate. The sequence is that of 3-phosphoshikimate 1-carboxyvinyltransferase from Endomicrobium trichonymphae.